Reading from the N-terminus, the 357-residue chain is Trans-enoyl reductase buaC (357 aa).

50–53 contributes to the NADP(+) binding site; sequence VDTK. 135 to 142 provides a ligand contact to substrate; sequence TALVSACM. Residues 170 to 173, 193 to 196, Tyr-211, and 258 to 259 contribute to the NADP(+) site; these read STAT, SPKN, and LN. Residue 278–282 participates in substrate binding; it reads ATLIT. Residue 347-348 participates in NADP(+) binding; it reads IS.

It belongs to the zinc-containing alcohol dehydrogenase family. In terms of assembly, monomer.

The protein operates within mycotoxin biosynthesis. Its function is as follows. Trans-enoyl reductase; part of the gene cluster that mediates the biosynthesis of burnettramic acids, an unusual class of bolaamphiphilic pyrrolizidinediones that display potent antibacterial, antifungal, and cytotoxic activities. The first step of the biosynthesis of burnettramic acids is the hydroxylation of proline by the proline hydroxylase buaE to generate 4-hydroxyproline. The PKS-NRPS buaA and trans-enoyl reductase buaC construct the highly reduced polyketide chain, and the condensation (C) domain of buaA then catalyzes the amide bond formation with the activated 4-hydroxyproline. This is followed by the R domain releasing the nascent polyketide-peptide directly via a Dieckmann condensation to afford a tetramic acid fused to the hydroxyproline, generating the bicyclic pyrrolidinedione moiety. The cytochrome P450 monooxygenases buaD and buaG are likely responsible for the multiple hydroxylations on the polyketide chain and its terminus, although in the heterologous context, buaD does not appear to be required. Therefore, while buaG may be a multifunctional cytochrome P450 monooxygenase, it cannot be ruled out that the two secondary alcohols on the polyketide chain could have an acetate origin. Finally, the glycosyltransferase buaB transfers beta-D-mannose to the aglycone burnettramic acid A to form burnettramic acid A. Burnettramic acid B is a minor cis-pyrrolizidine epimer of burnettramic acid A and it is likely that small amounts of it form naturally in acidic environments. The protein is Trans-enoyl reductase buaC of Petromyces alliaceus (Aspergillus alliaceus).